We begin with the raw amino-acid sequence, 72 residues long: Translation initiation factor IF-1 (72 aa).

The S1-like domain maps to 1–72; sequence MAKEDSIEMQ…TKGRIVFRAR (72 aa).

This sequence belongs to the IF-1 family. As to quaternary structure, component of the 30S ribosomal translation pre-initiation complex which assembles on the 30S ribosome in the order IF-2 and IF-3, IF-1 and N-formylmethionyl-tRNA(fMet); mRNA recruitment can occur at any time during PIC assembly.

It is found in the cytoplasm. One of the essential components for the initiation of protein synthesis. Stabilizes the binding of IF-2 and IF-3 on the 30S subunit to which N-formylmethionyl-tRNA(fMet) subsequently binds. Helps modulate mRNA selection, yielding the 30S pre-initiation complex (PIC). Upon addition of the 50S ribosomal subunit IF-1, IF-2 and IF-3 are released leaving the mature 70S translation initiation complex. This Idiomarina loihiensis (strain ATCC BAA-735 / DSM 15497 / L2-TR) protein is Translation initiation factor IF-1.